The chain runs to 337 residues: Anthranilate phosphoribosyltransferase (337 aa).

5-phospho-alpha-D-ribose 1-diphosphate-binding positions include glycine 81, 84–85, serine 89, 91–94, 109–117, and alanine 121; these read GD, NVST, and KHGNRALSS. An anthranilate-binding site is contributed by glycine 81. Position 93 (serine 93) interacts with Mg(2+). Asparagine 112 lines the anthranilate pocket. Arginine 167 provides a ligand contact to anthranilate. Residues aspartate 226 and glutamate 227 each contribute to the Mg(2+) site.

The protein belongs to the anthranilate phosphoribosyltransferase family. In terms of assembly, homodimer. Requires Mg(2+) as cofactor.

It catalyses the reaction N-(5-phospho-beta-D-ribosyl)anthranilate + diphosphate = 5-phospho-alpha-D-ribose 1-diphosphate + anthranilate. It participates in amino-acid biosynthesis; L-tryptophan biosynthesis; L-tryptophan from chorismate: step 2/5. In terms of biological role, catalyzes the transfer of the phosphoribosyl group of 5-phosphorylribose-1-pyrophosphate (PRPP) to anthranilate to yield N-(5'-phosphoribosyl)-anthranilate (PRA). The polypeptide is Anthranilate phosphoribosyltransferase (Bradyrhizobium sp. (strain ORS 278)).